The primary structure comprises 643 residues: MCGICCSVNFSAEHFSQDLKEDLLYNLKQRGPNSSKQLLKSDVNYQCLFSAHVLHLRGVLTTQPVEDERGNVFLWNGEIFSGIKVEAEENDTQILFNYLSSCKNESEILSLFSEVQGPWSFIYYQASSHYLWFGRDFFGRRSLLWHFSNLGKSFCLSSVGTQTSGLANQWQEVPASGLFRIDLKSTVISGCIILQLYPWKYISRENIIEENVNSLSQISADLPAFVSVVANEAKLYLEKPVVPLNMMLPQAALETHCSNISNVPPTREILQVFLTDVHMKEVIQQFIDVLSVAVKKRVLCLPRDENLTANEVLKTCDRKANVAILFSGGIDSMVIATLADRHIPLDEPIDLLNVAFIAEEKTMPTTFNREGNKQKNKCEIPSEEFSKDVAAAAADSPNKHVSVPDRITGRAGLKELQAVSPSRIWNFVEINVSMEELQKLRRTRICHLIRPLDTVLDDSIGCAVWFASRGIGWLVAQEGVKSYQSNAKVVLTGIGADEQLAGYSRHRVRFQSHGLEGLNKEIMMELGRISSRNLGRDDRVIGDHGKEARFPFLDENVVSFLNSLPIWEKANLTLPRGIGEKLLLRLAAVELGLTASALLPKRAMQFGSRIAKMEKINEKASDKCGRLQIMSLENLSIEKETKL.

Cysteine 2 functions as the For GATase activity in the catalytic mechanism. One can recognise a Glutamine amidotransferase type-2 domain in the interval 2–184 (CGICCSVNFS…ASGLFRIDLK (183 aa)). The 317-residue stretch at 285–601 (QFIDVLSVAV…GLTASALLPK (317 aa)) folds into the Asparagine synthetase domain.

In Homo sapiens (Human), this protein is Asparagine synthetase domain-containing protein 1 (ASNSD1).